A 523-amino-acid polypeptide reads, in one-letter code: ATP synthase subunit alpha (523 aa).

ATP is bound at residue 179–186; it reads GDRQTGKT.

It belongs to the ATPase alpha/beta chains family. F-type ATPases have 2 components, CF(1) - the catalytic core - and CF(0) - the membrane proton channel. CF(1) has five subunits: alpha(3), beta(3), gamma(1), delta(1), epsilon(1). CF(0) has three main subunits: a(1), b(2) and c(9-12). The alpha and beta chains form an alternating ring which encloses part of the gamma chain. CF(1) is attached to CF(0) by a central stalk formed by the gamma and epsilon chains, while a peripheral stalk is formed by the delta and b chains.

The protein resides in the cell inner membrane. The enzyme catalyses ATP + H2O + 4 H(+)(in) = ADP + phosphate + 5 H(+)(out). Its function is as follows. Produces ATP from ADP in the presence of a proton gradient across the membrane. The alpha chain is a regulatory subunit. This chain is ATP synthase subunit alpha, found in Vibrio vulnificus (strain YJ016).